Reading from the N-terminus, the 453-residue chain is UDP-N-acetylmuramoylalanine--D-glutamate ligase (453 aa).

117-123 (GSNGKST) lines the ATP pocket.

The protein belongs to the MurCDEF family.

The protein resides in the cytoplasm. The enzyme catalyses UDP-N-acetyl-alpha-D-muramoyl-L-alanine + D-glutamate + ATP = UDP-N-acetyl-alpha-D-muramoyl-L-alanyl-D-glutamate + ADP + phosphate + H(+). It functions in the pathway cell wall biogenesis; peptidoglycan biosynthesis. Functionally, cell wall formation. Catalyzes the addition of glutamate to the nucleotide precursor UDP-N-acetylmuramoyl-L-alanine (UMA). This Chromobacterium violaceum (strain ATCC 12472 / DSM 30191 / JCM 1249 / CCUG 213 / NBRC 12614 / NCIMB 9131 / NCTC 9757 / MK) protein is UDP-N-acetylmuramoylalanine--D-glutamate ligase.